Consider the following 1298-residue polypeptide: Major viral transcription factor ICP4 (1298 aa).

Disordered regions lie at residues 1 to 82, 94 to 291, 534 to 554, 594 to 620, 718 to 826, and 877 to 904; these read MASE…VSPR, AVRT…PRRV, PASP…ADDD, AGAR…HADA, AASA…HTAA, and PAAQ…RLFG. Pro residues predominate over residues 11–23; sequence SPGPTDGPPPTPS. A compositionally biased stretch (acidic residues) spans 37-47; it reads ETEEGGDDPDH. Residues 48-63 show a composition bias toward basic and acidic residues; sequence DPDHPHDLDDARRDGR. Residues 100–110 are compositionally biased toward pro residues; the sequence is TPDPAASPPRT. Residues 116–127 are compositionally biased toward acidic residues; the sequence is DDDDGDEYDDAA. Residues 130–144 are compositionally biased toward basic and acidic residues; the sequence is AGDRAPARGREREAP. Residues 174–198 are compositionally biased toward low complexity; that stretch reads RPSASSTSSDSGSSSSSSASSSSSS. A compositionally biased stretch (acidic residues) spans 199–209; that stretch reads SDEDEDDDGND. The segment covering 210-219 has biased composition (basic and acidic residues); the sequence is AADHAREARA. Over residues 222–233 the composition is skewed to low complexity; it reads RGPSSAAPAAPG. The segment covering 234–244 has biased composition (pro residues); sequence RTPPPPGPPPL. Low complexity-rich tracts occupy residues 245 to 263 and 272 to 282; these read SEAA…ASAG and AAVAGRDATGR. The DNA-binding element occupies 262–490; sequence AGRIERRRAR…ENAALTGAAG (229 aa). The segment covering 544–554 has biased composition (basic and acidic residues); it reads DAARHADADDD. Composition is skewed to pro residues over residues 599 to 618 and 764 to 783; these read ASPP…PPHA and LPAP…PAQP. A compositionally biased stretch (low complexity) spans 784-802; that stretch reads AAPRAAAAQARPRPVAVSR.

This sequence belongs to the herpesviridae ICP4 family. As to quaternary structure, forms homodimers. Interacts with transcriptional regulator ICP27; this interaction is required for proper incorporation of ICP4 into virions. Interacts with host TBP and host TAF1; these interactions help the stabilization of the pre-nitiation complex on specific promoters. Interacts with host GTF2B. Post-translationally, ADP-ribosylated. In terms of processing, the long stretch of Ser is a major site of phosphorylation. Only the phosphorylated forms are capable of interacting with beta or gamma genes.

The protein localises to the host nucleus. It is found in the host cytoplasm. It localises to the virion tegument. Functionally, plays an essential role in the regulation of viral gene expression by both activating and repressing host RNA polymerase II-mediated transcription. Binds with high affinity to the sequence 5'-ATCGTC-3'. Activates transcription by recruiting a form of the host TFIID to promoters and stabilizing the pre-initiation complex formation. Negatively regulates its own transcription. This immediate early (IE) protein is absolutely necessary for the transition from IE transcription to later viral gene transcription. The sequence is that of Major viral transcription factor ICP4 (ICP4) from Human herpesvirus 1 (strain 17) (HHV-1).